Here is a 751-residue protein sequence, read N- to C-terminus: Lanosterol synthase erg7A (751 aa).

A disordered region spans residues 1-22 (MTGGPIASWRTAAQGHLTPDEN). A PFTB 1 repeat occupies 147–189 (ATEIKRYLFARQHPEDGGWGLHIEAHSSVFGTCMNYVALRLIG). D481 functions as the Proton donor in the catalytic mechanism. 3 PFTB repeats span residues 508 to 553 (LKDS…MIGY), 585 to 625 (KDKA…ASVG), and 634 to 675 (ARRG…VQTA).

This sequence belongs to the terpene cyclase/mutase family.

The protein localises to the lipid droplet. It is found in the endoplasmic reticulum membrane. The catalysed reaction is (S)-2,3-epoxysqualene = lanosterol. It functions in the pathway steroid metabolism; ergosterol biosynthesis. In terms of biological role, lanosterol synthase; part of the third module of ergosterol biosynthesis pathway that includes the late steps of the pathway. ERG7A and ERG7B catalyze the cyclization of (S)-2,3 oxidosqualene to lanosterol, a reaction that forms the sterol core. The third module or late pathway involves the ergosterol synthesis itself through consecutive reactions that mainly occur in the endoplasmic reticulum (ER) membrane. Firstly, the squalene synthase erg9 catalyzes the condensation of 2 farnesyl pyrophosphate moieties to form squalene, which is the precursor of all steroids. Squalene synthase is crucial for balancing the incorporation of farnesyl diphosphate (FPP) into sterol and nonsterol isoprene synthesis. Secondly, squalene is converted into lanosterol by the consecutive action of the squalene epoxidase erg1 and the lanosterol synthase erg7. Then, the delta(24)-sterol C-methyltransferase erg6 methylates lanosterol at C-24 to produce eburicol. Eburicol is the substrate of the sterol 14-alpha demethylase encoded by cyp51A and cyp51B, to yield 4,4,24-trimethyl ergosta-8,14,24(28)-trienol. The C-14 reductase erg24 then reduces the C14=C15 double bond which leads to 4,4-dimethylfecosterol. A sequence of further demethylations at C-4, involving the C-4 demethylation complex containing the C-4 methylsterol oxidases erg25A or erg25B, the sterol-4-alpha-carboxylate 3-dehydrogenase erg26 and the 3-keto-steroid reductase erg27, leads to the production of fecosterol via 4-methylfecosterol. The C-8 sterol isomerase erg2 then catalyzes the reaction which results in unsaturation at C-7 in the B ring of sterols and thus converts fecosterol to episterol. The sterol-C5-desaturase erg3B then catalyzes the introduction of a C-5 double bond in the B ring to produce 5-dehydroepisterol. The 2 other sterol-C5-desaturases, erg3A and erg3C, seem to be less important in ergosterol biosynthesis. The C-22 sterol desaturase erg5 further converts 5-dehydroepisterol into ergosta-5,7,22,24(28)-tetraen-3beta-ol by forming the C-22(23) double bond in the sterol side chain. Finally, ergosta-5,7,22,24(28)-tetraen-3beta-ol is substrate of the C-24(28) sterol reductases erg4A and erg4B to produce ergosterol. Possible alternative sterol biosynthetic pathways might exist from fecosterol to ergosterol, depending on the activities of the erg3 isoforms. In Aspergillus fumigatus (strain ATCC MYA-4609 / CBS 101355 / FGSC A1100 / Af293) (Neosartorya fumigata), this protein is Lanosterol synthase erg7A.